The chain runs to 123 residues: MPTSNQLLRNSRQPVRKTKKTPALRGCPQRRGRCSKVYIINPKKPNSGNRKVARVRLTSGFEITAYIPGVGHNVQEHSVVLVRGGRVKDLPGVRYHIVRGTLDAAGVKDRKQGRSKYGVKKPK.

The segment covering 1-13 (MPTSNQLLRNSRQ) has biased composition (polar residues). Positions 1 to 30 (MPTSNQLLRNSRQPVRKTKKTPALRGCPQR) are disordered. Basic residues predominate over residues 14–30 (PVRKTKKTPALRGCPQR).

Belongs to the universal ribosomal protein uS12 family. As to quaternary structure, part of the 30S ribosomal subunit.

It is found in the plastid. It localises to the chloroplast. In terms of biological role, with S4 and S5 plays an important role in translational accuracy. Located at the interface of the 30S and 50S subunits. The protein is Small ribosomal subunit protein uS12cz/uS12cy/uS12cx/uS12w (rps12-A) of Pelargonium hortorum (Common geranium).